The primary structure comprises 167 residues: Plastocyanin major isoform, chloroplastic (167 aa).

The transit peptide at 1 to 52 directs the protein to the chloroplast; the sequence is MASVTSATVAIPSFTGLKASTIKSSATVRIQTAAVASPKLTVKSSLKNFGVA. The N-terminal 16 residues, 53-68, are a transit peptide targeting the thylakoid; the sequence is AVAAAASIALAGNAMA. A Plastocyanin-like domain is found at 69 to 167; sequence IEVLLGGGDG…AGMVGKVTVN (99 aa). Positions 105, 152, 155, and 160 each coordinate Cu cation.

The protein belongs to the plastocyanin family. Requires Cu(2+) as cofactor.

The protein localises to the plastid. Its subcellular location is the chloroplast thylakoid membrane. In terms of biological role, participates in electron transfer between P700 and the cytochrome b6-f complex in photosystem I. Seems to be the major plastocyanin in Arabidopsis. This is Plastocyanin major isoform, chloroplastic (DRT112) from Arabidopsis thaliana (Mouse-ear cress).